We begin with the raw amino-acid sequence, 178 residues long: Ribosome maturation factor RimM (178 aa).

The region spanning alanine 101 to phenylalanine 178 is the PRC barrel domain.

This sequence belongs to the RimM family. In terms of assembly, binds ribosomal protein uS19.

It localises to the cytoplasm. Its function is as follows. An accessory protein needed during the final step in the assembly of 30S ribosomal subunit, possibly for assembly of the head region. Essential for efficient processing of 16S rRNA. May be needed both before and after RbfA during the maturation of 16S rRNA. It has affinity for free ribosomal 30S subunits but not for 70S ribosomes. In Pseudomonas putida (strain ATCC 47054 / DSM 6125 / CFBP 8728 / NCIMB 11950 / KT2440), this protein is Ribosome maturation factor RimM.